A 370-amino-acid polypeptide reads, in one-letter code: S-adenosylmethionine:tRNA ribosyltransferase-isomerase (370 aa).

Belongs to the QueA family. Monomer.

It is found in the cytoplasm. It catalyses the reaction 7-aminomethyl-7-carbaguanosine(34) in tRNA + S-adenosyl-L-methionine = epoxyqueuosine(34) in tRNA + adenine + L-methionine + 2 H(+). The protein operates within tRNA modification; tRNA-queuosine biosynthesis. In terms of biological role, transfers and isomerizes the ribose moiety from AdoMet to the 7-aminomethyl group of 7-deazaguanine (preQ1-tRNA) to give epoxyqueuosine (oQ-tRNA). The polypeptide is S-adenosylmethionine:tRNA ribosyltransferase-isomerase (Synechococcus sp. (strain WH7803)).